Reading from the N-terminus, the 416-residue chain is Multifunctional CCA protein (416 aa).

The ATP site is built by Gly-8 and Arg-11. The CTP site is built by Gly-8 and Arg-11. Positions 21 and 23 each coordinate Mg(2+). The ATP site is built by Arg-91, Arg-137, and Arg-140. Positions 91, 137, and 140 each coordinate CTP. The HD domain occupies 228-329; the sequence is TGVHTLMVLA…VKIFDKADFW (102 aa).

It belongs to the tRNA nucleotidyltransferase/poly(A) polymerase family. Bacterial CCA-adding enzyme type 1 subfamily. In terms of assembly, monomer. Can also form homodimers and oligomers. Requires Mg(2+) as cofactor. Ni(2+) serves as cofactor.

The enzyme catalyses a tRNA precursor + 2 CTP + ATP = a tRNA with a 3' CCA end + 3 diphosphate. It catalyses the reaction a tRNA with a 3' CCA end + 2 CTP + ATP = a tRNA with a 3' CCACCA end + 3 diphosphate. Catalyzes the addition and repair of the essential 3'-terminal CCA sequence in tRNAs without using a nucleic acid template. Adds these three nucleotides in the order of C, C, and A to the tRNA nucleotide-73, using CTP and ATP as substrates and producing inorganic pyrophosphate. tRNA 3'-terminal CCA addition is required both for tRNA processing and repair. Also involved in tRNA surveillance by mediating tandem CCA addition to generate a CCACCA at the 3' terminus of unstable tRNAs. While stable tRNAs receive only 3'-terminal CCA, unstable tRNAs are marked with CCACCA and rapidly degraded. This Shewanella baltica (strain OS195) protein is Multifunctional CCA protein.